Consider the following 118-residue polypeptide: Small ribosomal subunit protein uS13 (118 aa).

The segment at 91-118 is disordered; sequence HRRSLPVRGQRTKTNARTRKGPRKPIKA.

The protein belongs to the universal ribosomal protein uS13 family. Part of the 30S ribosomal subunit. Forms a loose heterodimer with protein S19. Forms two bridges to the 50S subunit in the 70S ribosome.

Located at the top of the head of the 30S subunit, it contacts several helices of the 16S rRNA. In the 70S ribosome it contacts the 23S rRNA (bridge B1a) and protein L5 of the 50S subunit (bridge B1b), connecting the 2 subunits; these bridges are implicated in subunit movement. Contacts the tRNAs in the A and P-sites. This chain is Small ribosomal subunit protein uS13, found in Francisella philomiragia subsp. philomiragia (strain ATCC 25017 / CCUG 19701 / FSC 153 / O#319-036).